Reading from the N-terminus, the 466-residue chain is Integrin-linked protein kinase homolog pat-4 (466 aa).

ANK repeat units lie at residues 50 to 79 (HAFS…RVNS), 83 to 112 (GDDT…DVNA), and 116 to 145 (HGMT…AVNV). Positions 210–465 (LNLITKIAES…QIIPILERMI (256 aa)) constitute a Protein kinase domain.

The protein belongs to the protein kinase superfamily. TKL Ser/Thr protein kinase family. Interacts (via protein kinase domain) with unc-112 (via N-terminus). Interacts (via ANK repeats) with unc-97 (via first LIM domain). Interacts (via protein kinase domain) with pat-6 (via C-terminus CH domain). May form a complex with unc-112, unc-97 and pat-6. Does not interact with integrin pat-3. Component of an integrin containing attachment complex, composed of at least pat-2, pat-3, pat-4, pat-6, unc-52, unc-97 and unc-112. As to expression, expressed in body wall muscle.

It is found in the cytoplasm. It localises to the myofibril. The protein resides in the sarcomere. Its subcellular location is the m line. The protein localises to the basal cell membrane. In terms of biological role, probable pseudokinase that acts as an adapter protein. Component of an integrin containing attachment complex, which is required for muscle development and maintenance. Involved in the assembly of dense bodies and M lines during body wall muscle development by recruiting several of their components including integrin pat-3, cpna-1, unc-89 and unc-112 to integrin-mediated attachment sites. Plays a role in distal tip cell (DTC) migration and in oocyte development probably by regulating the actin cytoskeleton. During the formation of neuromuscular junctions at the larval stage, negatively regulates membrane protrusion from body wall muscles. May be involved in thermotolerance and lifespan. This is Integrin-linked protein kinase homolog pat-4 from Caenorhabditis elegans.